Here is a 440-residue protein sequence, read N- to C-terminus: Serine/threonine-protein kinase VRK1 (440 aa).

Residues Trp37–Tyr317 enclose the Protein kinase domain. ATP is bound by residues Ile43 to Ile51 and Lys71. Residue Lys71 forms a Glycyl lysine isopeptide (Lys-Gly) (interchain with G-Cter in SUMO2) linkage. The active-site Proton acceptor is the Asp177. Ser342 carries the post-translational modification Phosphoserine; by PLK3. Phosphoserine is present on Ser376. A Phosphothreonine modification is found at Thr378. Polar residues-rich tracts occupy residues Gln379–Ser391 and Ser398–Asp410. Positions Gln379–Lys440 are disordered. Residues Arg387–Gly393 are required for interaction with the nucleosome.

The protein belongs to the protein kinase superfamily. CK1 Ser/Thr protein kinase family. VRK subfamily. As to quaternary structure, interacts with HDAC1, KAT2B, SETDB1, KDM3A and KDM4A. Associates with the nucleosome through interactions with nucleosome DNA, histone H2A and histone H2B; the interaction with H2A and H2B is mediated by the nucleosome acidic patch, a cluster of negatively charged residues of H2A and H2B forming a cleft within the nucleosome core. Post-translationally, autophosphorylated at various serine and threonine residues. Autophosphorylation does not impair its ability to phosphorylate p53/TP53. Phosphorylation by PLK3 leads to induction of Golgi fragmentation during mitosis. As to expression, highly expressed in testis. Expressed in liver, kidney and muscle. Weakly expressed in thymus, bone marrow and spleen.

Its subcellular location is the nucleus. The protein resides in the cytoplasm. It is found in the cajal body. It catalyses the reaction L-seryl-[protein] + ATP = O-phospho-L-seryl-[protein] + ADP + H(+). The catalysed reaction is L-threonyl-[protein] + ATP = O-phospho-L-threonyl-[protein] + ADP + H(+). Active in presence of Mn(2+), Mg(2+) and Zn(2+), but is not functional with Ca(2+) or Cu(2+). Has a higher affinity for Mn(2+) than for Mg(2+). RAN inhibits its autophosphorylation and its ability to phosphorylate histone H3. Functionally, serine/threonine kinase involved in the regulation of key cellular processes including the cell cycle, nuclear condensation, transcription regulation, and DNA damage response. Controls chromatin organization and remodeling by mediating phosphorylation of histone H3 on 'Thr-4' and histone H2AX (H2aXT4ph). It also phosphorylates KAT5 in response to DNA damage, promoting KAT5 association with chromatin and histone acetyltransferase activity. Is involved in the regulation of cell cycle progression of neural progenitors, and is required for proper cortical neuronal migration. Is involved in neurite elongation and branching in motor neurons, and has an essential role in Cajal bodies assembly, acting through COIL phosphorylation and the control of coilin degradation. Involved in Golgi disassembly during the cell cycle: following phosphorylation by PLK3 during mitosis, required to induce Golgi fragmentation. Phosphorylates BANF1: disrupts its ability to bind DNA, reduces its binding to LEM domain-containing proteins and causes its relocalization from the nucleus to the cytoplasm. Phosphorylates TP53BP1 and p53/TP53 on 'Thr-18', preventing the interaction between p53/TP53 and MDM2. Phosphorylates ATF2 which activates its transcriptional activity. Phosphorylates JUN. The sequence is that of Serine/threonine-protein kinase VRK1 from Mus musculus (Mouse).